The chain runs to 632 residues: Probable potassium transport system protein Kup 1 (632 aa).

12 helical membrane passes run 17 to 37 (LFYLALGSVGVVYGDIGTSPL), 60 to 80 (LISLMIWALTIIVTIKYVLFL), 106 to 126 (TALLMLLGLMGAALFLGDAMI), 144 to 164 (PSLAEYIVPISVVILALLFVV), 175 to 195 (FFGPITAVWFLVMAAAGISHI), 210 to 230 (AVSFLLHEGFYGVVVLGAVFL), 254 to 274 (WFLLVFPALTLNYLGQGALVL), 292 to 312 (ALLPVVILATAATIIASQAVI), 344 to 364 (IFLPSVNAVLFFGVIFLVLSF), 370 to 390 (LATAYGISVTGAMVVTSIMAF), 401 to 421 (LPVAVIALAPLVVLEMIFLGA), and 426 to 446 (IHDGGYIPILIATAFTVVMWT).

The protein belongs to the HAK/KUP transporter (TC 2.A.72) family.

It localises to the cell inner membrane. The enzyme catalyses K(+)(in) + H(+)(in) = K(+)(out) + H(+)(out). Its function is as follows. Transport of potassium into the cell. Likely operates as a K(+):H(+) symporter. This chain is Probable potassium transport system protein Kup 1, found in Rhizobium etli (strain ATCC 51251 / DSM 11541 / JCM 21823 / NBRC 15573 / CFN 42).